A 184-amino-acid chain; its full sequence is Large ribosomal subunit protein uL5 (184 aa).

It belongs to the universal ribosomal protein uL5 family. Part of the 50S ribosomal subunit; part of the 5S rRNA/L5/L18/L25 subcomplex. Contacts the 5S rRNA and the P site tRNA. Forms a bridge to the 30S subunit in the 70S ribosome.

Its function is as follows. This is one of the proteins that bind and probably mediate the attachment of the 5S RNA into the large ribosomal subunit, where it forms part of the central protuberance. In the 70S ribosome it contacts protein S13 of the 30S subunit (bridge B1b), connecting the 2 subunits; this bridge is implicated in subunit movement. Contacts the P site tRNA; the 5S rRNA and some of its associated proteins might help stabilize positioning of ribosome-bound tRNAs. The sequence is that of Large ribosomal subunit protein uL5 from Corynebacterium kroppenstedtii (strain DSM 44385 / JCM 11950 / CIP 105744 / CCUG 35717).